The primary structure comprises 611 residues: MPEVEDTCFLTSPITVCRTKHLHLRCSVDFSSRALTGIAALTIQSQEDNLRSLVLDTKALTIEKVVINGQEVKYALGERQSYKGSPMEISLPIALSKNQEVVIEISFETSPKSSALQWLTPEQTSGKEHPYLFSQCQAIHCRAVLPCQDTPSVKLTYTAEVSVPKELVALMSAVRDGETPDPEDPSRKIYKFNQKVPIPCYLIALVVGALESRKIGPRTLVWSEKEQVEKSAYEFSETESMLKIAEDLGGPYVWGQYDLLVLPPSFPYGGMENPCLTFVTPTLLAGDKSLSNVIAHEISHSWTGNLVTNKTWDHFWLNEGHTVYLERHICGRLFGEKFRHFHALGGWGELQNTIKTFGETHPFTKLVVDLTDVDPDVAYSSVPYEKGFALLFHLEQLLGGPEVFLGFLKAYVERFSYKSITTDDWKNFLYSHFKDKVDILNQVDWNAWLYSPGLPPVKPNYDMTLTNACIALSQRWITAKEEDLNTFNATDLKDLSTHQVNEFLAQVLQQAPLPLGHVKRMQEVYNFNAVNNSEIRFRWLRLCIQSKWEEAIPLALKMATEQGRMKFTRPLFKDLAAFDKSHDQAIRTYQAHKASMHPVTAMLVGKDLKVD.

Residue K73 is modified to N6-acetyllysine. Residues 135-137 (QCQ) and 267-272 (PYGGME) contribute to the a peptide site. H296 lines the Zn(2+) pocket. E297 functions as the Proton acceptor in the catalytic mechanism. Residues H300 and E319 each contribute to the Zn(2+) site. N6-acetyllysine is present on K337. The Proton donor role is filled by Y384. S416 bears the Phosphoserine mark. 564–566 (RMK) provides a ligand contact to a peptide. N6-acetyllysine is present on K573.

It belongs to the peptidase M1 family. Requires Zn(2+) as cofactor. In terms of processing, phosphorylation at Ser-416 inhibits enzymatic activity.

It localises to the cytoplasm. It carries out the reaction leukotriene A4 + H2O = leukotriene B4. The protein operates within lipid metabolism; leukotriene B4 biosynthesis. Its activity is regulated as follows. Inhibited by bestatin. Subject to suicide inhibition by leukotriene A4. Epoxide hydrolase that catalyzes the final step in the biosynthesis of the pro-inflammatory mediator leukotriene B4. Also has aminopeptidase activity. The protein is Leukotriene A-4 hydrolase (LTA4H) of Chinchilla lanigera (Long-tailed chinchilla).